A 74-amino-acid chain; its full sequence is Peptide BmKb2 (74 aa).

Residues 1 to 22 form the signal peptide; sequence MEIKYLLTVFLVLLIVSDHCQA. A Lysine amide modification is found at Lys40. Positions 46–74 are excised as a propeptide; it reads DLNGQIDHFKNFRKRDAELEELLSKLPIY.

The protein belongs to the non-disulfide-bridged peptide (NDBP) superfamily. Short antimicrobial peptide (group 4) family.

The protein localises to the secreted. The protein resides in the target cell membrane. Functionally, antibacterial peptide. This peptide gene is up-regulated at the transcriptional level after the venom gland is challenged by Gram-positive bacteria. The protein is Peptide BmKb2 of Olivierus martensii (Manchurian scorpion).